Reading from the N-terminus, the 267-residue chain is Dichloromethane dehalogenase (267 aa).

The GST N-terminal domain occupies 3–85 (TKLRYLHHPA…YLSEKYDCSS (83 aa)). Residues 91 to 224 (TLEERGHIQQ…AWQYENVRKY (134 aa)) form the GST C-terminal domain.

The protein belongs to the GST superfamily. In terms of assembly, homohexamer.

The protein localises to the cytoplasm. The catalysed reaction is dichloromethane + H2O = formaldehyde + 2 chloride + 2 H(+). It participates in xenobiotic degradation; dichloromethane degradation. The chain is Dichloromethane dehalogenase (dcmA) from Methylophilus leisingeri (strain DSM 6813 / VKM B-2013 / DM11).